A 264-amino-acid polypeptide reads, in one-letter code: Cell division protein FtsQ (264 aa).

The interval 1 to 24 (MAGPTTAERGARQQESSGPPRVRR) is disordered. Residues 1-32 (MAGPTTAERGARQQESSGPPRVRRFRPPRLRT) lie on the Cytoplasmic side of the membrane. Residues 33–53 (IIILAVALVLVAGGTVWVLYG) traverse the membrane as a helical segment. Topologically, residues 54–264 (SNWTRLERVS…VATAPASSGS (211 aa)) are extracellular. Positions 57-126 (TRLERVSVSG…HGIGLKVTER (70 aa)) constitute a POTRA domain.

It belongs to the FtsQ/DivIB family. FtsQ subfamily.

It is found in the cell membrane. Its function is as follows. Essential cell division protein. The chain is Cell division protein FtsQ from Streptomyces coelicolor (strain ATCC BAA-471 / A3(2) / M145).